The chain runs to 595 residues: Potassium-transporting ATPase potassium-binding subunit (595 aa).

The next 10 membrane-spanning stretches (helical) occupy residues 9 to 29 (ICGY…YMAA), 63 to 83 (TGYA…VYAL), 135 to 155 (GLTV…VALI), 177 to 197 (ILHI…GQGV), 285 to 305 (FLEM…FGVM), 312 to 332 (GWVI…VTVL), 412 to 432 (GLYG…LMIG), 451 to 471 (AIVI…AVML), 516 to 536 (LMLG…VLAI), and 560 to 580 (FVGL…IPAL).

It belongs to the KdpA family. The system is composed of three essential subunits: KdpA, KdpB and KdpC.

It localises to the cell inner membrane. Part of the high-affinity ATP-driven potassium transport (or Kdp) system, which catalyzes the hydrolysis of ATP coupled with the electrogenic transport of potassium into the cytoplasm. This subunit binds the periplasmic potassium ions and delivers the ions to the membrane domain of KdpB through an intramembrane tunnel. In Methylococcus capsulatus (strain ATCC 33009 / NCIMB 11132 / Bath), this protein is Potassium-transporting ATPase potassium-binding subunit.